Reading from the N-terminus, the 22-residue chain is Mu-conotoxin SxIIIC (22 aa).

Intrachain disulfides connect cysteine 3-cysteine 15, cysteine 4-cysteine 21, and cysteine 10-cysteine 22. Residue cysteine 22 is modified to Cysteine amide.

Belongs to the conotoxin M superfamily. In terms of tissue distribution, expressed by the venom duct.

The protein localises to the secreted. Mu-conotoxins block voltage-gated sodium channels (Nav). This toxin potently inhibits hNav1.4/SCN4A (IC(50)=15.11 nM). It also displays lower activities on other human subtypes (Nav1.1/SCN1A; IC(50)=132 nM, Nav1.2/SCN2A; IC(50)=363.8, Nav1.3/SCN3A; IC(50)=89.4, Nav1.6/SCN3A; IC(50)=124.9, Nav1.7/SCN7A; IC(50)=152.2). At Nav1.7/SCN9A, it does not elicit change in channel voltage-dependence of fast inactivation or activation, suggesting it acts as a pore blocker. Interestingly, it blocks current inhibition in an irreversible manner (tested during 35 minutes). This Conus striolatus (Cone snail) protein is Mu-conotoxin SxIIIC.